We begin with the raw amino-acid sequence, 131 residues long: Sec-independent protein translocase protein TatB (131 aa).

A helical membrane pass occupies residues 2 to 22 (FDGIGFMELLLIGILGLVVLG). Composition is skewed to polar residues over residues 68–83 (ESQG…QDSI) and 116–131 (AEKS…KPNG). A disordered region spans residues 68–131 (ESQGLKNLSP…TGANSDKPNG (64 aa)).

It belongs to the TatB family. The Tat system comprises two distinct complexes: a TatABC complex, containing multiple copies of TatA, TatB and TatC subunits, and a separate TatA complex, containing only TatA subunits. Substrates initially bind to the TatABC complex, which probably triggers association of the separate TatA complex to form the active translocon.

It is found in the cell inner membrane. In terms of biological role, part of the twin-arginine translocation (Tat) system that transports large folded proteins containing a characteristic twin-arginine motif in their signal peptide across membranes. Together with TatC, TatB is part of a receptor directly interacting with Tat signal peptides. TatB may form an oligomeric binding site that transiently accommodates folded Tat precursor proteins before their translocation. The polypeptide is Sec-independent protein translocase protein TatB (Shewanella pealeana (strain ATCC 700345 / ANG-SQ1)).